Here is a 444-residue protein sequence, read N- to C-terminus: Ribulose bisphosphate carboxylase large chain (444 aa).

The residue at position 5 (Lys5) is an N6,N6,N6-trimethyllysine. Asn114 and Thr164 together coordinate substrate. Residue Lys166 is the Proton acceptor of the active site. Lys168 is a binding site for substrate. The Mg(2+) site is built by Lys192, Asp194, and Glu195. Lys192 bears the N6-carboxylysine mark. His285 (proton acceptor) is an active-site residue. Arg286, His318, and Ser370 together coordinate substrate.

The protein belongs to the RuBisCO large chain family. Type I subfamily. As to quaternary structure, heterohexadecamer of 8 large chains and 8 small chains; disulfide-linked. The disulfide link is formed within the large subunit homodimers. It depends on Mg(2+) as a cofactor. The disulfide bond which can form in the large chain dimeric partners within the hexadecamer appears to be associated with oxidative stress and protein turnover.

The protein resides in the plastid. It localises to the chloroplast. It catalyses the reaction 2 (2R)-3-phosphoglycerate + 2 H(+) = D-ribulose 1,5-bisphosphate + CO2 + H2O. The enzyme catalyses D-ribulose 1,5-bisphosphate + O2 = 2-phosphoglycolate + (2R)-3-phosphoglycerate + 2 H(+). RuBisCO catalyzes two reactions: the carboxylation of D-ribulose 1,5-bisphosphate, the primary event in carbon dioxide fixation, as well as the oxidative fragmentation of the pentose substrate in the photorespiration process. Both reactions occur simultaneously and in competition at the same active site. The sequence is that of Ribulose bisphosphate carboxylase large chain from Botrychium strictum (Fern).